The sequence spans 434 residues: DNA primase DnaG (434 aa).

Positions 171 to 250 constitute a Toprim domain; that stretch reads DAIIIVEGRA…AFSPRRRSVE (80 aa). Positions 177, 219, and 221 each coordinate Mg(2+). The interval 290–319 is disordered; that stretch reads GEEEHSSVSQKEEGNNTTPDVPADLPEEPP. A compositionally biased stretch (basic and acidic residues) spans 292 to 303; it reads EEHSSVSQKEEG.

Belongs to the archaeal DnaG primase family. Forms a ternary complex with MCM helicase and DNA. The cofactor is Mg(2+).

It carries out the reaction ssDNA + n NTP = ssDNA/pppN(pN)n-1 hybrid + (n-1) diphosphate.. Functionally, RNA polymerase that catalyzes the synthesis of short RNA molecules used as primers for DNA polymerase during DNA replication. The sequence is that of DNA primase DnaG from Methanocorpusculum labreanum (strain ATCC 43576 / DSM 4855 / Z).